We begin with the raw amino-acid sequence, 89 residues long: MASCSRAQVISLYRMLMKESKKFPSYNYRTYALRRVKDGFRENLHVDNPRTLDLLINQARENLAVIKRQVSIGHLYSAQRTVVEKEPHL.

Belongs to the complex I LYR family.

It is found in the mitochondrion. It localises to the nucleus. The protein operates within cofactor biosynthesis; iron-sulfur cluster biosynthesis. Functionally, required for nuclear and mitochondrial iron-sulfur protein biosynthesis. This chain is LYR motif-containing protein 4 (lyrm4), found in Danio rerio (Zebrafish).